Reading from the N-terminus, the 286-residue chain is Pyridoxal kinase PdxY (286 aa).

Substrate-binding positions include Ser-9 and 44-45; that span reads TQ. Residues Asp-111, Ala-143, Glu-148, Lys-181, and 208–211 each bind ATP; that span reads RPLV. Asp-223 is a substrate binding site.

It belongs to the pyridoxine kinase family. PdxY subfamily. As to quaternary structure, homodimer. Requires Mg(2+) as cofactor.

The catalysed reaction is pyridoxal + ATP = pyridoxal 5'-phosphate + ADP + H(+). It functions in the pathway cofactor metabolism; pyridoxal 5'-phosphate salvage; pyridoxal 5'-phosphate from pyridoxal: step 1/1. Its function is as follows. Pyridoxal kinase involved in the salvage pathway of pyridoxal 5'-phosphate (PLP). Catalyzes the phosphorylation of pyridoxal to PLP. In Salmonella choleraesuis (strain SC-B67), this protein is Pyridoxal kinase PdxY.